A 101-amino-acid polypeptide reads, in one-letter code: Small ribosomal subunit protein bS18c (101 aa).

The protein belongs to the bacterial ribosomal protein bS18 family. In terms of assembly, part of the 30S ribosomal subunit.

The protein localises to the plastid. It localises to the chloroplast. This Gossypium barbadense (Sea Island cotton) protein is Small ribosomal subunit protein bS18c.